We begin with the raw amino-acid sequence, 520 residues long: Ribonuclease Y (520 aa).

The chain crosses the membrane as a helical span at residues T4–V24. In terms of domain architecture, KH spans T210–L273. An HD domain is found at V336–A429.

Belongs to the RNase Y family.

The protein resides in the cell membrane. Endoribonuclease that initiates mRNA decay. In Bacillus pumilus (strain SAFR-032), this protein is Ribonuclease Y.